The sequence spans 387 residues: Glucose-1-phosphate adenylyltransferase (387 aa).

Alpha-D-glucose 1-phosphate contacts are provided by residues tyrosine 99, glycine 164, 179 to 180, and serine 190; that span reads EK.

The protein belongs to the bacterial/plant glucose-1-phosphate adenylyltransferase family. As to quaternary structure, homotetramer.

It carries out the reaction alpha-D-glucose 1-phosphate + ATP + H(+) = ADP-alpha-D-glucose + diphosphate. The protein operates within glycan biosynthesis; glycogen biosynthesis. Involved in the biosynthesis of ADP-glucose, a building block required for the elongation reactions to produce glycogen. Catalyzes the reaction between ATP and alpha-D-glucose 1-phosphate (G1P) to produce pyrophosphate and ADP-Glc. The chain is Glucose-1-phosphate adenylyltransferase from Geobacillus stearothermophilus (Bacillus stearothermophilus).